The sequence spans 197 residues: TLE family member 5 (197 aa).

The CCN domain stretch occupies residues 166–197 (LSALGSQAHLSKEDKNGHDGDTHQEDDGEKSD). Positions 174 to 197 (HLSKEDKNGHDGDTHQEDDGEKSD) are disordered. Basic and acidic residues predominate over residues 175–197 (LSKEDKNGHDGDTHQEDDGEKSD). Position 196 is a phosphoserine (S196).

The protein belongs to the WD repeat Groucho/TLE family. Homooligomer and heterooligomer with other family members. Binds TCF7. Binds the NF-kappa-B subunit RELA. Interacts with PHF12. Interacts (via Q domain) with SIX3. Interacts with SIX6. Post-translationally, ubiquitinated by XIAP/BIRC4. In terms of tissue distribution, found predominantly in muscle, heart and Placenta. In fetal tissues, abundantly expressed in the heart, lung, kidney, brain and liver.

The protein localises to the nucleus. Its function is as follows. Transcriptional corepressor. Acts as a dominant repressor towards other family members. Inhibits NF-kappa-B-regulated gene expression. May be required for the initiation and maintenance of the differentiated state. Essential for the transcriptional repressor activity of SIX3 during retina and lens development. This chain is TLE family member 5, found in Homo sapiens (Human).